Here is a 1483-residue protein sequence, read N- to C-terminus: Heme-responsive zinc finger transcription factor HAP1 (1483 aa).

A compositionally biased stretch (polar residues) spans 1–50; sequence MSNTPYNSSVPSIASMTQSSVSRSPNMHTATTPGANTSSNSPPLHMSSDS. A disordered region spans residues 1-56; sequence MSNTPYNSSVPSIASMTQSSVSRSPNMHTATTPGANTSSNSPPLHMSSDSSKIKRK. Positions 64, 67, 74, 81, 84, and 93 each coordinate Zn(2+). Residues 64–93 constitute a DNA-binding region (zn(2)-C6 fungal-type); that stretch reads CTICRKRKVKCDKLRPHCQQCTKTGVAHLC. Positions 105-134 form a coiled coil; sequence EKELLKDNELKKLRERVKSLEKTLSKVHSS. The segment at 126-208 is disordered; sequence KTLSKVHSSP…ANSSSLSISN (83 aa). Positions 130 to 142 are enriched in low complexity; it reads KVHSSPSSNSLKS. Polar residues-rich tracts occupy residues 143 to 152 and 160 to 176; these read YNTPESSNLF and TLVN…SHMH. Positions 177–208 are enriched in low complexity; it reads QQQQQQQQQEQQQDFSRSANANANSSSLSISN. Residues 244-444 form a heme-responsive; required for HMC formation region; the sequence is KGDPYLKLLW…NTIPHHQPQS (201 aa). 6 HRM repeats span residues 280–285, 299–304, 323–328, 347–352, 389–394, and 415–420; these read KCPINH, KCPVDH, RCPVDH, and RCPIDH. Composition is skewed to polar residues over residues 432-447 and 706-734; these read STHN…SGSH and QLNA…NPTL. Disordered regions lie at residues 432-458 and 706-767; these read STHN…NRKH and QLNA…KENQ. Over residues 735-759 the composition is skewed to low complexity; the sequence is NNNMSAATTNSSSRSGSADSRSGSN. The stretch at 1192–1197 is one HRM 7 repeat; it reads KCPVYQ.

In terms of assembly, binds DNA as a homodimer. Interacts with SRO9 and YDJ1. In the absence of heme, binds to at least four cellular proteins, including YDJ1 and SRO9, forming a high-molecular-weight complex (HMC) which results in repression of its activity and dictates its DNA-binding specificity.

It localises to the nucleus. Functionally, regulation of oxygen dependent gene expression. It modulates the expression of Iso-1 (CYP1) and Iso-2 (CYP3) cytochrome c. In response to heme, promotes transcription of genes encoding functions required for respiration, controlling oxidative damage and repression of anaerobic genes. Binds to the sequence 5'-CGGNNNTNNCGG-3'. The protein is Heme-responsive zinc finger transcription factor HAP1 (HAP1) of Saccharomyces cerevisiae (strain Lalvin EC1118 / Prise de mousse) (Baker's yeast).